Consider the following 861-residue polypeptide: Semaphorin-4D (861 aa).

The N-terminal stretch at 1–23 is a signal peptide; that stretch reads MRMCAPVRGLFLALVVVLRTAVA. The region spanning 24–500 is the Sema domain; that stretch reads FAPVPRLTWE…SNSGVVQAPL (477 aa). Topologically, residues 24–733 are extracellular; the sequence is FAPVPRLTWE…TVYLKSSDNR (710 aa). N-linked (GlcNAc...) asparagine glycosylation is found at Asn-49 and Asn-77. Intrachain disulfides connect Cys-97–Cys-108 and Cys-126–Cys-135. N-linked (GlcNAc...) asparagine glycosylation is found at Asn-139 and Asn-191. Cystine bridges form between Cys-257/Cys-370 and Cys-281/Cys-326. N-linked (GlcNAc...) asparagine glycans are attached at residues Asn-379 and Asn-419. Residues 502–551 form the PSI domain; the sequence is FCEKHGSCEDCVLARDPYCAWSPAIKACVTLHQEEASSRGWIQDMSGDTS. 4 disulfides stabilise this stretch: Cys-503–Cys-520, Cys-509–Cys-553, Cys-512–Cys-529, and Cys-576–Cys-624. Residues 555 to 636 enclose the Ig-like C2-type domain; sequence DKSKESFNQH…EERVRNKTVS (82 aa). 2 N-linked (GlcNAc...) asparagine glycosylation sites follow: Asn-613 and Asn-632. A disordered region spans residues 649–709; the sequence is VPRTPPSPTS…KSSSGTSCEP (61 aa). Residues 657 to 681 show a composition bias toward polar residues; the sequence is TSEDAQTEGSKITSKMPVASTQGSS. The helical transmembrane segment at 734-754 threads the bilayer; it reads LLMSLLLFIFVLFLCLFSYNC. Topologically, residues 755–861 are cytoplasmic; sequence YKGYLPGQCL…KFADSDADGD (107 aa). Ser-782 and Ser-832 each carry phosphoserine. The tract at residues 793-839 is disordered; that stretch reads VEPGSFSQQNGDHPKPALDTGYETEQDTITSKVPTDREDSQRIDELS. Positions 826 to 839 are enriched in basic and acidic residues; that stretch reads PTDREDSQRIDELS.

Belongs to the semaphorin family. In terms of assembly, homodimer. Interacts with PLXNB1. Interacts with PLXNB2. As to expression, strongly expressed in lymphoid tissues, especially in the thymus, as well as in the nervous tissues. Expressed in neurons and glia in the developing hippocampus.

It localises to the cell membrane. In terms of biological role, cell surface receptor for PLXNB1 and PLXNB2 that plays an important role in cell-cell signaling. Regulates GABAergic synapse development. Promotes the development of inhibitory synapses in a PLXNB1-dependent manner. Modulates the complexity and arborization of developing neurites in hippocampal neurons by activating PLXNB1 and interaction with PLXNB1 mediates activation of RHOA. Promotes the migration of cerebellar granule cells. Plays a role in the immune system; induces B-cells to aggregate and improves their viability (in vitro). Induces endothelial cell migration through the activation of PTK2B/PYK2, SRC, and the phosphatidylinositol 3-kinase-AKT pathway. This chain is Semaphorin-4D (Sema4d), found in Mus musculus (Mouse).